We begin with the raw amino-acid sequence, 220 residues long: UPF0441 protein Spro_4274 (220 aa).

The segment at 181–220 (MAPKPAVTNTVTRGGFGESVAKQTSMQRSSATSSSRSMGG) is disordered. Residues 203–220 (QTSMQRSSATSSSRSMGG) are compositionally biased toward low complexity.

It belongs to the UPF0441 family.

The chain is UPF0441 protein Spro_4274 from Serratia proteamaculans (strain 568).